A 714-amino-acid chain; its full sequence is MRMTVIPIVILCGVLSVVYAVWTTKSVLDADQGNERMREIAGYIREGAQAYLTRQYLTIAIVGLIVAVLAWYLLSAIAAIGFVIGAVLSGVAGFVGMHVSVRANLRTAQAASHSLGAGLDIAFKSGAITGMLVAGLALLGVSIYYFVLTSVLGHPPGSRAVIDALVSLGFGASLISIFARLGGGIFTKGADVGGDLVGKVEAGIPEDDPRNPATIADNVGDNVGDCAGMAADLFETYAVSVVATMVLAAIFFAGTPILESAMVYPLAICGACILTSIAGTFFVKLGTNNSIMGALYKGLIATGVFSVAGLAVATYATVGWGTIGTVAGMEITGTNLFFCGLVGLVVTALIVVITEYYTGTNKRPVNSIAQASVTGHGTNVIQGLAVSLESTALPAIVIVGGIIGTYQLGGLFGTGIAVTAMLGLAGMIVALDAFGPVTDNAGGIAEMAGLDPDVRKATDALDAVGNTTKAVTKGYAIGSAGLGALVLFAAYANDLSYFAANGDTYPYFKDIGEISFSLANPYVVAGLLFGGLIPYLFGGIAMTAVGKAASAIVEEVRRQFREKPGIMAGTEKPDYGRAVDLLTKAAIREMVIPSLLPVLAPLVVYFGVLLISGSKASAFAALGASLLGVIINGLFVAISMTSGGGAWDNAKKSFEDGFIDKDGVRHVKGSEAHKASVTGDTVGDPYKDTAGPAVNPAIKITNIVALLLLAVLAH.

Residues 1–20 (MRMTVIPIVILCGVLSVVYA) form the signal peptide. 4 consecutive transmembrane segments (helical) span residues 52-74 (LTRQYLTIAIVGLIVAVLAWYLL), 85-105 (GAVLSGVAGFVGMHVSVRANL), 128-148 (ITGMLVAGLALLGVSIYYFVL), and 166-186 (VSLGFGASLISIFARLGGGIF). Substrate is bound at residue Lys188. Mg(2+)-binding residues include Asp191, Asp195, Asn218, and Asp221. Transmembrane regions (helical) follow at residues 238-258 (AVSVVATMVLAAIFFAGTPIL), 263-283 (VYPLAICGACILTSIAGTFFV), 298-318 (GLIATGVFSVAGLAVATYATV), 333-353 (GTNLFFCGLVGLVVTALIVVI), 383-403 (GLAVSLESTALPAIVIVGGII), and 411-431 (LFGTGIAVTAMLGLAGMIVAL). Asp439 lines the Mg(2+) pocket. A run of 4 helical transmembrane segments spans residues 470–490 (AVTKGYAIGSAGLGALVLFAA), 522–542 (YVVAGLLFGGLIPYLFGGIAM), 591–611 (VIPSLLPVLAPLVVYFGVLLI), and 618–638 (AFAALGASLLGVIINGLFVAI). 3 residues coordinate Ca(2+): Asp648, Asp680, and Asp684. Lys687 is a substrate binding site. Residues 693–713 (AVNPAIKITNIVALLLLAVLA) traverse the membrane as a helical segment.

The protein belongs to the H(+)-translocating pyrophosphatase (TC 3.A.10) family. K(+)-insensitive subfamily. As to quaternary structure, homodimer. Mg(2+) serves as cofactor.

It localises to the acidocalcisome membrane. It catalyses the reaction diphosphate + H2O + H(+)(in) = 2 phosphate + 2 H(+)(out). Functionally, proton pump that utilizes the energy of pyrophosphate hydrolysis as the driving force for proton movement across the membrane. Generates a proton motive force. This chain is K(+)-insensitive pyrophosphate-energized proton pump, found in Agrobacterium fabrum (strain C58 / ATCC 33970) (Agrobacterium tumefaciens (strain C58)).